Consider the following 621-residue polypeptide: Type 2 DNA topoisomerase 6 subunit B (621 aa).

ATP is bound by residues Asn-48, Asp-80, 101–102, 111–118, and Lys-435; these read SR and GQQGIGIS.

It belongs to the TOP6B family. Homodimer. Heterotetramer of two Top6A and two Top6B chains.

The catalysed reaction is ATP-dependent breakage, passage and rejoining of double-stranded DNA.. Functionally, relaxes both positive and negative superturns and exhibits a strong decatenase activity. The protein is Type 2 DNA topoisomerase 6 subunit B of Methanosarcina barkeri (strain Fusaro / DSM 804).